Here is a 256-residue protein sequence, read N- to C-terminus: Thrombin-like enzyme cerastocytin (256 aa).

The first 18 residues, 1–18 (MVLISVLASLLVLQLSYA), serve as a signal peptide directing secretion. The propeptide occupies 19-24 (QKSSEL). The region spanning 25–247 (VIGGAECNIN…YTDWIRNIIA (223 aa)) is the Peptidase S1 domain. 5 disulfide bridges follow: Cys31/Cys161, Cys98/Cys254, Cys140/Cys208, Cys172/Cys187, and Cys198/Cys223. The N-linked (GlcNAc...) asparagine glycan is linked to Asn44. Active-site charge relay system residues include His65 and Asp108. N-linked (GlcNAc...) asparagine glycosylation is found at Asn119, Asn120, and Asn152. The active-site Charge relay system is Ser202.

Belongs to the peptidase S1 family. Snake venom subfamily. Monomer. In terms of tissue distribution, expressed by the venom gland.

It localises to the secreted. Its activity is regulated as follows. Its platelets aggregating activity is inhibited by chlorpromazine, theophylline mepacrine. Its platelet aggregating activity and its amidolytic activity are inhibited by PMSF, TPCK, TLCK and soybean trypsin inhibitors. Is unaffected by hirudin or by antithrombin-III in the presence of heparin. In terms of biological role, thrombin-like snake venom serine protease which potently induces platelet aggregation and has fibrinogenolytic activities. Clots purified fibrinogen and hydrolyzes alpha-chains (FGA). High concentrations of this enzyme also cleave prothrombin (F2) and factor X (F10). Is also able to activate factor XIII (F8). The protein is Thrombin-like enzyme cerastocytin of Cerastes cerastes (Horned desert viper).